The primary structure comprises 179 residues: Peptide deformylase (179 aa).

C102 and H144 together coordinate Fe cation. E145 is a catalytic residue. Residue H148 participates in Fe cation binding.

The protein belongs to the polypeptide deformylase family. The cofactor is Fe(2+).

It carries out the reaction N-terminal N-formyl-L-methionyl-[peptide] + H2O = N-terminal L-methionyl-[peptide] + formate. Removes the formyl group from the N-terminal Met of newly synthesized proteins. Requires at least a dipeptide for an efficient rate of reaction. N-terminal L-methionine is a prerequisite for activity but the enzyme has broad specificity at other positions. In Wolbachia pipientis subsp. Culex pipiens (strain wPip), this protein is Peptide deformylase.